Here is a 702-residue protein sequence, read N- to C-terminus: Archaeal Lon protease (702 aa).

The disordered stretch occupies residues 1 to 63 (MSNESTNDAP…VGVEGDVSID (63 aa)). The Cytoplasmic segment spans residues 1-183 (MSNESTNDAP…EARKRNQMRS (183 aa)). The segment covering 10–48 (PPDDDPDDPEPSVDHDDTDGLQDDPADSVDDAGEVDDLE) has biased composition (acidic residues). 117-124 (GSPGTGKS) serves as a coordination point for ATP. A helical transmembrane segment spans residues 184 to 201 (FLMWIMILLAVGYALLIA). Residues 202–206 (TPARP) lie on the Extracellular side of the membrane. Residues 207-223 (LLALLSAAGIYLLFRYT) traverse the membrane as a helical segment. The Cytoplasmic portion of the chain corresponds to 224–702 (NRGSDAMVPK…GTTGGNPSPQ (479 aa)). Residues 487-667 (EEAVGRVNGL…SEVLDVALVG (181 aa)) enclose the Lon proteolytic domain. Residues Ser574 and Lys617 contribute to the active site.

It belongs to the peptidase S16 family. Archaeal LonB subfamily. In terms of assembly, homohexamer. Organized in a ring with a central cavity.

The protein localises to the cell membrane. Functionally, ATP-dependent serine protease that mediates the selective degradation of mutant and abnormal proteins as well as certain short-lived regulatory proteins. Degrades polypeptides processively. This chain is Archaeal Lon protease, found in Halobacterium salinarum (strain ATCC 700922 / JCM 11081 / NRC-1) (Halobacterium halobium).